Here is a 2202-residue protein sequence, read N- to C-terminus: Nonribosomal peptide synthetase 5 (2202 aa).

Residues Thr58–Ala443 are adenylation 1. In terms of domain architecture, Carrier 1 spans Glu517–Ser593. The residue at position 554 (Ser554) is an O-(pantetheine 4'-phosphoryl)serine. Residues Ile625–Thr918 form a condensation 1 region. The adenylation 2 stretch occupies residues Thr1105–Ala1482. One can recognise a Carrier 2 domain in the interval Asp1563–Val1643. Ser1602 is subject to O-(pantetheine 4'-phosphoryl)serine. Residues Gly1664–Gln1952 form a condensation 2 region. Residues Pro2103–Gln2129 form a disordered region. A compositionally biased stretch (polar residues) spans Glu2115–Gln2129. Residues Gln2130–Ile2202 form the Carrier 3 domain. Ser2164 is modified (O-(pantetheine 4'-phosphoryl)serine).

Belongs to the NRP synthetase family.

Functionally, nonribosomal peptide synthesis (NRPS) is a key mechanism responsible for the biosynthesis of bioactive metabolites which are potentially contributing to organismal virulence. The polypeptide is Nonribosomal peptide synthetase 5 (NRPS5) (Aspergillus fumigatus (strain ATCC MYA-4609 / CBS 101355 / FGSC A1100 / Af293) (Neosartorya fumigata)).